A 196-amino-acid chain; its full sequence is Signaling threshold-regulating transmembrane adapter 1 (196 aa).

Positions Met1–Gly24 are cleaved as a signal peptide. At Asp25–Gln40 the chain is on the extracellular side. Residue Asn26 is glycosylated (N-linked (GlcNAc...) asparagine). Residues Ala41–Ala61 form a helical membrane-spanning segment. The Cytoplasmic portion of the chain corresponds to His62–Ser196. A phosphoserine mark is found at Ser80 and Ser83. Tyr90 carries the phosphotyrosine modification. The tract at residues Tyr90 to Leu93 is interaction with GRB2. The residue at position 102 (Ser102) is a Phosphoserine. A Phosphotyrosine modification is found at Tyr127. The tract at residues Leu132–Glu167 is disordered. The residue at position 144 (Thr144) is a Phosphothreonine. Residues Val146–Val151 form an interaction with PTPN11 region. 2 positions are modified to phosphotyrosine: Tyr148 and Tyr169. The segment at Tyr169–Val172 is interaction with CSK. Ser182 is subject to Phosphoserine. Tyr188 is modified (phosphotyrosine). Residues Tyr188–Ser191 form an interaction with GRB2 region.

As to quaternary structure, homodimer; disulfide-linked. When phosphorylated, interacts with PTPN11/SHP2, GRB2 and CSK. Post-translationally, phosphorylated on tyrosines by LCK, FYN or ZAP70 upon TCR activation; which leads to the recruitment of PTPN11, GRB2 and CSK. Specifically expressed in T- and B-cells. Present in plasma cells but not in germinal center B-cells (at protein level). Expressed in T- and B-cell lymphoma.

Its subcellular location is the cell membrane. Negatively regulates TCR (T-cell antigen receptor)-mediated signaling in T-cells. Involved in positive selection of T-cells. The chain is Signaling threshold-regulating transmembrane adapter 1 (SIT1) from Homo sapiens (Human).